We begin with the raw amino-acid sequence, 73 residues long: uncharacterized protein (73 aa).

The first 22 residues, 1-22 (MKILGVTGFILICLLAISVLMD), serve as a signal peptide directing secretion. A helical transmembrane segment spans residues 44 to 66 (TFAEWVVLLFFVLVLVREMYVIY).

The protein localises to the membrane. This is an uncharacterized protein from Bacillus subtilis (strain 168).